Reading from the N-terminus, the 92-residue chain is Progonadoliberin-1 (92 aa).

The N-terminal stretch at 1–23 is a signal peptide; the sequence is MELVPKFLAGLILLTLCVGGCYA. Glutamine 24 carries the post-translational modification Pyrrolidone carboxylic acid. Glycine 33 is modified (glycine amide).

Belongs to the GnRH family.

The protein resides in the secreted. Stimulates the secretion of gonadotropins; it stimulates the secretion of both luteinizing and follicle-stimulating hormones. This is Progonadoliberin-1 (GNRH1) from Tupaia belangeri (Common tree shrew).